A 35-amino-acid polypeptide reads, in one-letter code: MAWTKPIIREIECGMEINMYGPENEDRHDDRDDLF.

The pyrroloquinoline quinone (Glu-Tyr) cross-link spans 16–20; that stretch reads EINMY.

This sequence belongs to the PqqA family.

It participates in cofactor biosynthesis; pyrroloquinoline quinone biosynthesis. In terms of biological role, required for coenzyme pyrroloquinoline quinone (PQQ) biosynthesis. PQQ is probably formed by cross-linking a specific glutamate to a specific tyrosine residue and excising these residues from the peptide. This Roseobacter denitrificans (strain ATCC 33942 / OCh 114) (Erythrobacter sp. (strain OCh 114)) protein is Coenzyme PQQ synthesis protein A.